Reading from the N-terminus, the 162-residue chain is Phospholipase A and acyltransferase 3 (162 aa).

At 1–133 the chain is on the cytoplasmic side; that stretch reads MRAPIPEPKP…VARSDQVRDV (133 aa). An LRAT domain is found at 13–129; it reads LIEIFRPFYR…LRYGVARSDQ (117 aa). Catalysis depends on residues H23 and H35. C113 serves as the catalytic Acyl-thioester intermediate. Residues 134 to 154 traverse the membrane as a helical segment; that stretch reads IIAASAAGMGLAAMSLIGVMF. Over 155–162 the chain is Lumenal; sequence SRNKRQKQ.

The protein belongs to the H-rev107 family. Interacts with PPP2R1A; this interaction might decrease PP2A activity.

It is found in the cell membrane. The protein resides in the cytoplasm. Its subcellular location is the cytosol. It localises to the perinuclear region. The protein localises to the peroxisome membrane. It is found in the mitochondrion membrane. The protein resides in the nucleus envelope. Its subcellular location is the lysosome membrane. It localises to the endoplasmic reticulum membrane. It catalyses the reaction a 1,2-diacyl-sn-glycero-3-phosphocholine + H2O = a 1-acyl-sn-glycero-3-phosphocholine + a fatty acid + H(+). The enzyme catalyses a 1,2-diacyl-sn-glycero-3-phosphocholine + H2O = a 2-acyl-sn-glycero-3-phosphocholine + a fatty acid + H(+). The catalysed reaction is 1,2-dihexadecanoyl-sn-glycero-3-phosphocholine + H2O = 1-hexadecanoyl-sn-glycero-3-phosphocholine + hexadecanoate + H(+). It carries out the reaction 1,2-dihexadecanoyl-sn-glycero-3-phosphocholine + H2O = 2-hexadecanoyl-sn-glycero-3-phosphocholine + hexadecanoate + H(+). It catalyses the reaction 1-hexadecanoyl-2-(9Z-octadecenoyl)-sn-glycero-3-phosphocholine + H2O = 2-(9Z-octadecenoyl)-sn-glycero-3-phosphocholine + hexadecanoate + H(+). The enzyme catalyses 1-hexadecanoyl-2-(9Z-octadecenoyl)-sn-glycero-3-phosphocholine + H2O = 1-hexadecanoyl-sn-glycero-3-phosphocholine + (9Z)-octadecenoate + H(+). The catalysed reaction is 1-hexadecanoyl-2-(5Z,8Z,11Z,14Z-eicosatetraenoyl)-sn-glycero-3-phosphocholine + H2O = 1-hexadecanoyl-sn-glycero-3-phosphocholine + (5Z,8Z,11Z,14Z)-eicosatetraenoate + H(+). It carries out the reaction 1-hexadecanoyl-2-(5Z,8Z,11Z,14Z-eicosatetraenoyl)-sn-glycero-3-phosphocholine + H2O = 2-(5Z,8Z,11Z,14Z)-eicosatetraenoyl-sn-glycero-3-phosphocholine + hexadecanoate + H(+). It catalyses the reaction 1-hexadecanoyl-2-(9Z,12Z-octadecadienoyl)-sn-glycero-3-phosphoethanolamine + H2O = 1-hexadecanoyl-sn-glycero-3-phosphoethanolamine + (9Z,12Z)-octadecadienoate + H(+). The enzyme catalyses 1-hexadecanoyl-2-(9Z,12Z-octadecadienoyl)-sn-glycero-3-phosphoethanolamine + H2O = 2-(9Z,12Z)-octadecadienoyl-sn-glycero-3-phosphoethanolamine + hexadecanoate + H(+). The catalysed reaction is 1-hexadecanoyl-2-(5Z,8Z,11Z,14Z-eicosatetraenoyl)-sn-glycero-3-phosphoethanolamine + H2O = 1-hexadecanoyl-sn-glycero-3-phosphoethanolamine + (5Z,8Z,11Z,14Z)-eicosatetraenoate + H(+). It carries out the reaction 1-hexadecanoyl-2-(5Z,8Z,11Z,14Z-eicosatetraenoyl)-sn-glycero-3-phosphoethanolamine + H2O = 2-(5Z,8Z,11Z,14Z)-eicosatetraenoyl-sn-glycero-3-phosphoethanolamine + hexadecanoate + H(+). It catalyses the reaction 1-hexanoyl-2-acyl-sn-glycero-3-phosphocholine + H2O = hexanoate + a 2-acyl-sn-glycero-3-phosphocholine + H(+). The enzyme catalyses 1-hexanoyl-2-acyl-sn-glycero-3-phosphocholine + H2O = 1-hexanoyl-sn-glycero-3-phosphocholine + a fatty acid + H(+). The catalysed reaction is 1,2-diheptadecanoyl-sn-glycero-3-phosphoethanolamine + 1-(9Z-octadecenoyl)-2-hexadecanoyl-sn-glycero-3-phosphocholine = 1,2-diheptadecanoyl-sn-glycero-3-phospho-N-hexadecanoyl-ethanolamine + 1-(9Z-octadecenoyl)-sn-glycero-3-phosphocholine + H(+). It carries out the reaction 1,2-diheptadecanoyl-sn-glycero-3-phosphoethanolamine + 1-(9Z-octadecenoyl)-2-hexadecanoyl-sn-glycero-3-phosphocholine = 1,2-diheptadecanoyl-sn-glycero-3-phospho-N-(9Z-octadecenoyl)-ethanolamine + 2-hexadecanoyl-sn-glycero-3-phosphocholine + H(+). It catalyses the reaction 1,2-dihexanoyl-sn-glycero-3-phosphoethanolamine + 2-heptanoyl-sn-glycero-3-phosphocholine = hexanoyl-sn-glycero-3-phosphoethanolamine + 1-hexanoyl-2-heptanoyl-sn-glycero-3-phosphocholine. The enzyme catalyses 1-hexadecanoyl-2-octadecanoyl-sn-glycero-3-phosphocholine + H2O = octadecanoate + 1-hexadecanoyl-sn-glycero-3-phosphocholine + H(+). The catalysed reaction is 1-hexadecanoyl-2-octadecanoyl-sn-glycero-3-phosphocholine + H2O = 2-octadecanoyl-sn-glycero-3-phosphocholine + hexadecanoate + H(+). It carries out the reaction 1-octadecanoyl-2-hexadecanoyl-sn-glycero-3-phosphocholine + H2O = 1-octadecanoyl-sn-glycero-3-phosphocholine + hexadecanoate + H(+). It catalyses the reaction 1-octadecanoyl-2-hexadecanoyl-sn-glycero-3-phosphocholine + H2O = 2-hexadecanoyl-sn-glycero-3-phosphocholine + octadecanoate + H(+). The enzyme catalyses 1-hexadecanoyl-2-(9Z,12Z-octadecadienoyl)-sn-glycero-3-phosphocholine + H2O = (9Z,12Z)-octadecadienoate + 1-hexadecanoyl-sn-glycero-3-phosphocholine + H(+). The catalysed reaction is 1-hexadecanoyl-2-(9Z,12Z-octadecadienoyl)-sn-glycero-3-phosphocholine + H2O = 2-(9Z,12Z-octadecadienoyl)-sn-glycero-3-phosphocholine + hexadecanoate + H(+). It carries out the reaction 1,2-di-(9Z-octadecenoyl)-sn-glycero-3-phosphocholine + H2O = 2-(9Z-octadecenoyl)-sn-glycero-3-phosphocholine + (9Z)-octadecenoate + H(+). It catalyses the reaction 1,2-dihexadecanoyl-sn-glycero-3-phosphocholine + H2O = hexadecanoyl-sn-glycero-3-phosphocholine + hexadecanoate + H(+). The enzyme catalyses 1,2-di-(9Z-octadecenoyl)-sn-glycero-3-phosphocholine + H2O = 1-(9Z-octadecenoyl)-sn-glycero-3-phosphocholine + (9Z)-octadecenoate + H(+). The catalysed reaction is 1,2-di-(9Z-octadecenoyl)-sn-glycero-3-phosphoethanolamine + 1,2-dihexadecanoyl-sn-glycero-3-phosphocholine = hexadecanoyl-sn-glycero-3-phosphocholine + N-hexadecanoyl-1,2-di-(9Z-octadecenoyl)-sn-glycero-3-phosphoethanolamine + H(+). It carries out the reaction 1,2-di-(9Z,12Z-octadecadienoyl)-sn-glycero-3-phosphocholine + H2O = 1-(9Z,12Z)-octadecadienoyl-sn-glycero-3-phosphocholine + (9Z,12Z)-octadecadienoate + H(+). Functionally, exhibits both phospholipase A1/2 and acyltransferase activities. Shows phospholipase A1 (PLA1) and A2 (PLA2), catalyzing the calcium-independent release of fatty acids from the sn-1 or sn-2 position of glycerophospholipids. For most substrates, PLA1 activity is much higher than PLA2 activity. Shows O-acyltransferase activity, catalyzing the transfer of a fatty acyl group from glycerophospholipid to the hydroxyl group of lysophospholipid. Shows N-acyltransferase activity, catalyzing the calcium-independent transfer of a fatty acyl group at the sn-1 position of phosphatidylcholine (PC) and other glycerophospholipids to the primary amine of phosphatidylethanolamine (PE), forming N-acylphosphatidylethanolamine (NAPE), which serves as precursor for N-acylethanolamines (NAEs). Exhibits high N-acyltransferase activity and low phospholipase A1/2 activity. Required for complete organelle rupture and degradation that occur during eye lens terminal differentiation, when fiber cells that compose the lens degrade all membrane-bound organelles in order to provide lens with transparency to allow the passage of light. Organelle membrane degradation is probably catalyzed by the phospholipase activity. Plays a role in phospholipid metabolism and adipogenesis. This Pongo abelii (Sumatran orangutan) protein is Phospholipase A and acyltransferase 3.